Consider the following 339-residue polypeptide: Vomeronasal type-1 receptor A14 (339 aa).

Over 1-42 (MMGVQICQGMMSEIPFFSPPPQFSYMMNKNIRLHTDSNIRNT) the chain is Extracellular. The chain crosses the membrane as a helical span at residues 43 to 63 (FFTDIGIGISANSLLLLFNIF). The Cytoplasmic portion of the chain corresponds to 64–75 (KLTRGQRSRLTD). The chain crosses the membrane as a helical span at residues 76 to 96 (LPIGLLSLINLLMLLMAAFIA). The Extracellular segment spans residues 97 to 119 (TDTFISWKGWDDIICKFLVYLYR). Cysteine 111 and cysteine 198 form a disulfide bridge. A helical membrane pass occupies residues 120-140 (TFRGLSLCTSCLLSVLQAIIL). At 141–160 (SPRSSCLAKFKHKPPHHISC) the chain is on the cytoplasmic side. The helical transmembrane segment at 161-181 (AILSLSVLYMFIGSHLLVSII) threads the bilayer. Residues 182–213 (ATPNLTTNDFIHVTQSCSILPMSYLMQCMFST) lie on the Extracellular side of the membrane. An N-linked (GlcNAc...) asparagine glycan is attached at asparagine 185. The chain crosses the membrane as a helical span at residues 214 to 234 (LLAIRDVFLISLMVLSTWYMV). Over 235–264 (ALLCRHRKQTRHLQGTSLSPKASPEQRATR) the chain is Cytoplasmic. The helical transmembrane segment at 265–285 (SILMLMSLFVLMSVFDSIVCS) threads the bilayer. Residues 286–296 (SRTMYLNDPIS) are Extracellular-facing. The helical transmembrane segment at 297–317 (YSIQLFMVHIYATVSPFVFIV) threads the bilayer. At 318-339 (TEKHIVNFLRSVCEGDECLNIH) the chain is on the cytoplasmic side.

This sequence belongs to the G-protein coupled receptor 1 family.

The protein resides in the cell membrane. Its function is as follows. Putative pheromone receptor implicated in the regulation of social as well as reproductive behavior. In Rattus norvegicus (Rat), this protein is Vomeronasal type-1 receptor A14.